Reading from the N-terminus, the 507-residue chain is ATP synthase subunit alpha, chloroplastic (507 aa).

Residue 170–177 coordinates ATP; that stretch reads GDRQTGKT.

The protein belongs to the ATPase alpha/beta chains family. As to quaternary structure, F-type ATPases have 2 components, CF(1) - the catalytic core - and CF(0) - the membrane proton channel. CF(1) has five subunits: alpha(3), beta(3), gamma(1), delta(1), epsilon(1). CF(0) has four main subunits: a, b, b' and c.

It localises to the plastid. Its subcellular location is the chloroplast thylakoid membrane. It catalyses the reaction ATP + H2O + 4 H(+)(in) = ADP + phosphate + 5 H(+)(out). In terms of biological role, produces ATP from ADP in the presence of a proton gradient across the membrane. The alpha chain is a regulatory subunit. This Gossypium barbadense (Sea Island cotton) protein is ATP synthase subunit alpha, chloroplastic.